The following is a 356-amino-acid chain: GDP-mannose:di-myo-inositol-1,3'-phosphate beta-1,2-mannosyltransferase (356 aa).

It belongs to the MDIP synthase family. It depends on Mg(2+) as a cofactor.

The catalysed reaction is bis(myo-inositol) 1,3'-phosphate + GDP-alpha-D-mannose = 2-O-(beta-D-mannosyl)-bis(myo-inositol) 1,3'-phosphate + GDP + H(+). The enzyme catalyses 2-O-(beta-D-mannosyl)-bis(myo-inositol) 1,3'-phosphate + GDP-alpha-D-mannose = 2-O-(beta-D-mannosyl-(1-&gt;2)-beta-D-mannosyl)-bis(myo-inositol) 1,3'-phosphate + GDP + H(+). It carries out the reaction bis(myo-inositol) 1,3'-phosphate + 2 GDP-alpha-D-mannose = 2-O-(beta-D-mannosyl-(1-&gt;2)-beta-D-mannosyl)-bis(myo-inositol) 1,3'-phosphate + 2 GDP + 2 H(+). Its function is as follows. Catalyzes the transfer of the mannosyl group from GDP-mannose to di-myo-inositol-1,3'-phosphate (DIP), producing mannosyl-di-myo-inositol phosphate (MDIP). Can also use MDIP as an acceptor of a second mannose residue, yielding di-mannosyl-di-myo-inositol phosphate (MMDIP). Minor amounts of the tri-mannosylated form are also formed. The protein is GDP-mannose:di-myo-inositol-1,3'-phosphate beta-1,2-mannosyltransferase of Thermotoga maritima (strain ATCC 43589 / DSM 3109 / JCM 10099 / NBRC 100826 / MSB8).